Reading from the N-terminus, the 499-residue chain is MGIIDTRIPDSKRFISGVTGDWEVIIGMEVHAQIISNSKLFSGASTKFGAEPNNHVSLIDAAMPGMLPVINQECVRQAVRTGLGLKAHINLKSVFDRKNYFYPDLPQGYQISQFRYPVVGEGKITISIGPDPNGQFEDIEIGIERLHLEQDAGKSIHDQHPTMSFVDLNRSGVALMEIVSKPDMRSSDEAKAYMTKLRTIVRYLGTCDGNMDEGSMRADVNVSVRRPGENFGTRCEIKNVNSIRFIGQAIEYEARRQIAILEDGGVIDQETRLFDAAKGETRSMRSKEEAHDYRYFPDPDLLPLEFDQAFVDALAVELPELPDDIKARFINKMGLTPYDASILVAERAIADYFEEVACGRDGKMAANWVINDLLGALNKDNCAIEETPVAPSQLGAIIDLIKEGTISGKIAKDLFEIIWNEGGDPRQVVEERNMKQVTDIKAIERAVDEIVSNNSDKVAQAKQKPTLIGWFVGQVMKATGGKANPQTVNELVKVKLGID.

It belongs to the GatB/GatE family. GatB subfamily. Heterotrimer of A, B and C subunits.

It catalyses the reaction L-glutamyl-tRNA(Gln) + L-glutamine + ATP + H2O = L-glutaminyl-tRNA(Gln) + L-glutamate + ADP + phosphate + H(+). The enzyme catalyses L-aspartyl-tRNA(Asn) + L-glutamine + ATP + H2O = L-asparaginyl-tRNA(Asn) + L-glutamate + ADP + phosphate + 2 H(+). Its function is as follows. Allows the formation of correctly charged Asn-tRNA(Asn) or Gln-tRNA(Gln) through the transamidation of misacylated Asp-tRNA(Asn) or Glu-tRNA(Gln) in organisms which lack either or both of asparaginyl-tRNA or glutaminyl-tRNA synthetases. The reaction takes place in the presence of glutamine and ATP through an activated phospho-Asp-tRNA(Asn) or phospho-Glu-tRNA(Gln). The protein is Aspartyl/glutamyl-tRNA(Asn/Gln) amidotransferase subunit B of Bartonella quintana (strain Toulouse) (Rochalimaea quintana).